The following is a 214-amino-acid chain: Adenylate kinase (214 aa).

10 to 15 (GAGKGT) is an ATP binding site. The interval 30-59 (STGDMFRDHKARGTEIGKQVQAIMDAGGLV) is NMP. Residues threonine 31, arginine 36, 57–59 (GLV), 85–88 (GYPR), and glutamine 92 each bind AMP. Positions 126-163 (GRRSCPRCGAVYHVSQNPPHRAGFCDRDDTALVQREDD) are LID. Arginine 127 contacts ATP. Zn(2+) is bound by residues cysteine 130 and cysteine 133. 136 to 137 (VY) contacts ATP. Zn(2+)-binding residues include cysteine 150 and aspartate 153. AMP is bound by residues arginine 160 and arginine 171. Glycine 199 contributes to the ATP binding site.

The protein belongs to the adenylate kinase family. Monomer.

It is found in the cytoplasm. It carries out the reaction AMP + ATP = 2 ADP. It functions in the pathway purine metabolism; AMP biosynthesis via salvage pathway; AMP from ADP: step 1/1. Its function is as follows. Catalyzes the reversible transfer of the terminal phosphate group between ATP and AMP. Plays an important role in cellular energy homeostasis and in adenine nucleotide metabolism. The chain is Adenylate kinase from Anaeromyxobacter sp. (strain K).